The following is a 459-amino-acid chain: ATP synthase subunit beta (459 aa).

Glycine 148 to threonine 155 serves as a coordination point for ATP.

This sequence belongs to the ATPase alpha/beta chains family. In terms of assembly, F-type ATPases have 2 components, CF(1) - the catalytic core - and CF(0) - the membrane proton channel. CF(1) has five subunits: alpha(3), beta(3), gamma(1), delta(1), epsilon(1). CF(0) has three main subunits: a(1), b(2) and c(9-12). The alpha and beta chains form an alternating ring which encloses part of the gamma chain. CF(1) is attached to CF(0) by a central stalk formed by the gamma and epsilon chains, while a peripheral stalk is formed by the delta and b chains.

It localises to the cell inner membrane. It catalyses the reaction ATP + H2O + 4 H(+)(in) = ADP + phosphate + 5 H(+)(out). In terms of biological role, produces ATP from ADP in the presence of a proton gradient across the membrane. The catalytic sites are hosted primarily by the beta subunits. In Cellvibrio japonicus (strain Ueda107) (Pseudomonas fluorescens subsp. cellulosa), this protein is ATP synthase subunit beta.